A 385-amino-acid polypeptide reads, in one-letter code: MVEEEGMRSLERADLAGYAARSCRSRGRMHPEEFRDDRPAFERDRDRIIHCAAFRRLEYKTQVFVNHEGDYYRTRLTHSLEVAQIGKAIARRLALNEELTEALALAHDLGHTPFGHTGEEVLNRLMEGFGGFEHNLQSFRVVDQLEERYPGFNGLNLSWEVLEGIIKHSSPYDRPTGLIEGFLPGVVPTIEAQIINFADEIAYNNHDIDDGLKSGYITIEQLNGVDLWREVWERIDTAHPGLDRERKKFQTISALIGLLIRDLITATEANLRAYGVSTLDDVRRVNRPLVTFSSAMEERNRSLKRFLFTNLYRHHKVERMRVKAERYLTQLFESYVKHPTLLPRKYQQKMDTLGRERVVCDYIAGMTDRFALDEFKRLFEPYERV.

The HD domain maps to 75–204; that stretch reads RLTHSLEVAQ…INFADEIAYN (130 aa).

It belongs to the dGTPase family. Type 2 subfamily.

In Geobacter sulfurreducens (strain ATCC 51573 / DSM 12127 / PCA), this protein is Deoxyguanosinetriphosphate triphosphohydrolase-like protein.